We begin with the raw amino-acid sequence, 339 residues long: DNA-directed RNA polymerase subunit alpha (339 aa).

The alpha N-terminal domain (alpha-NTD) stretch occupies residues 1–233 (MVREEVAGST…DLFLPFLHAE (233 aa)). Positions 266-339 (GIPLNCIFID…IDLLKNKLSF (74 aa)) are alpha C-terminal domain (alpha-CTD).

Belongs to the RNA polymerase alpha chain family. In terms of assembly, in plastids the minimal PEP RNA polymerase catalytic core is composed of four subunits: alpha, beta, beta', and beta''. When a (nuclear-encoded) sigma factor is associated with the core the holoenzyme is formed, which can initiate transcription.

It is found in the plastid. The protein resides in the chloroplast. It carries out the reaction RNA(n) + a ribonucleoside 5'-triphosphate = RNA(n+1) + diphosphate. Functionally, DNA-dependent RNA polymerase catalyzes the transcription of DNA into RNA using the four ribonucleoside triphosphates as substrates. This Aegilops speltoides (Goatgrass) protein is DNA-directed RNA polymerase subunit alpha.